The following is a 206-amino-acid chain: MGQVASMPHRCGTYVLELHEWYRKFVEECPSGLITLHEFRQFFSDVTVGENSSEYAEQIFRALDNNGDGIVDFREYVTAISMLAHGTPEDKLKWSFKLYDKDGDGAITRSEMLEIMRAVYKMSVVASLTKVNPMTAEECTNRIFVRLDKDQNAIISLQEFVDGSLGDEWVRQMLECDLSTVEIQKMTKHSHLPARSSRERLFHANT.

Gly2 carries N-myristoyl glycine lipidation. 4 EF-hand domains span residues 31–49 (SGLITLHEFRQFFSDVTVG), 51–86 (NSSEYAEQIFRALDNNGDGIVDFREYVTAISMLAHG), 87–122 (TPEDKLKWSFKLYDKDGDGAITRSEMLEIMRAVYKM), and 135–170 (TAEECTNRIFVRLDKDQNAIISLQEFVDGSLGDEWV). Asp64, Asn66, Asp68, Glu75, Asp100, Asp102, Asp104, and Glu111 together coordinate Ca(2+).

Retina; inner segments, somata and synaptic terminals of cone receptors.

Does not stimulate guanylyl cyclase (GC) when free calcium ion concentration is low, but inhibits GC when free calcium ions concentration is elevated. This is Guanylyl cyclase inhibitory protein (GCIP) from Lithobates pipiens (Northern leopard frog).